We begin with the raw amino-acid sequence, 551 residues long: Solute carrier family 22 member 27 (551 aa).

Topologically, residues 1-15 (MSFQELLNQVGSLGR) are cytoplasmic. Residues 16-36 (FQILQIVFLLLLNAIVVPHIA) form a helical membrane-spanning segment. The Extracellular segment spans residues 37 to 145 (MENFTAAIPN…DLVCESQALN (109 aa)). Residues Asn-39, Asn-56, Asn-62, Asn-102, and Asn-107 are each glycosylated (N-linked (GlcNAc...) asparagine). A helical membrane pass occupies residues 146–166 (SVTKFSFMIGLFIGGIICGHL). Over 167-173 (SDRLGRK) the chain is Cytoplasmic. A helical membrane pass occupies residues 174–194 (FILTCALLQFAITETCVAFAP). At 195 to 203 (SFFIYCSLR) the chain is on the extracellular side. A helical membrane pass occupies residues 204–224 (FLAGLSVEPILVNSHLLMLEW). Residues 225–234 (TSPKFLTMMA) lie on the Cytoplasmic side of the membrane. The chain crosses the membrane as a helical span at residues 235–255 (ALLSCAPNIGYMISAGLAFLF). At 256–258 (RIW) the chain is on the extracellular side. The helical transmembrane segment at 259–279 (HHLQLTMSVPIFFFLILTRWL) threads the bilayer. At 280–348 (SESARWLIVT…LFHTSILRKR (69 aa)) the chain is on the cytoplasmic side. A helical transmembrane segment spans residues 349 to 369 (ICVLSFMRLFFTVSIFGLAVH). Residues 370-376 (LQHLSSN) are Extracellular-facing. Residues 377 to 397 (IILLQFLISALAILVSVIGPF) form a helical membrane-spanning segment. Topologically, residues 398–405 (VLNHIGRR) are cytoplasmic. Residues 406–426 (ITYLVLMSLRGIFILIAVFVP) form a helical membrane-spanning segment. The Extracellular segment spans residues 427–432 (QEMQTL). The helical transmembrane segment at 433 to 453 (RIIMATLAEGISSLCVGVSRL) threads the bilayer. Topologically, residues 454–467 (HTNELLPTTLRATA) are cytoplasmic. Residues 468–488 (VGVIGFFGNSGSFLSPLFMLL) form a helical membrane-spanning segment. At 489-494 (ATYYAN) the chain is on the extracellular side. The chain crosses the membrane as a helical span at residues 495-515 (MPWIFYGGFSIFNAFTVFLLP). Topologically, residues 516 to 551 (ETKNQPLPDSTHDVGNDWKESRKGKKEDPIIKVTRF) are cytoplasmic. The tract at residues 523-551 (PDSTHDVGNDWKESRKGKKEDPIIKVTRF) is disordered. A compositionally biased stretch (basic and acidic residues) spans 525-545 (STHDVGNDWKESRKGKKEDPI).

It belongs to the major facilitator (TC 2.A.1) superfamily. Organic cation transporter (TC 2.A.1.19) family. As to expression, expressed in proximal kidney tubules, and in liver hepatocytes (at protein level).

It is found in the cell membrane. In terms of biological role, does not appear to have transporter activity. Its function is as follows. Sodium-independent organic anion transporter which exhibits high specificity for L-carnitine. Can also transport salicylic acid and the drug cimetidine. This is Solute carrier family 22 member 27 from Mus musculus (Mouse).